Consider the following 352-residue polypeptide: Carbohydrate sulfotransferase 11 (352 aa).

Topologically, residues 1 to 16 (MKPALLEVMRMNRICR) are cytoplasmic. Residues 17–37 (MVLATCLGSFILVIFYFQSML) traverse the membrane as a helical; Signal-anchor for type II membrane protein segment. Over 38-352 (HPVMRRNPFG…YSVPNYLKLD (315 aa)) the chain is Lumenal. 3'-phosphoadenylyl sulfate-binding positions include 124–130 (PKVACTN) and 186–194 (REPFERLVS). Asparagine 205, asparagine 223, asparagine 321, and asparagine 342 each carry an N-linked (GlcNAc...) asparagine glycan.

This sequence belongs to the sulfotransferase 2 family. Post-translationally, N-glycosylated; required for activity and stability.

The protein localises to the golgi apparatus membrane. The enzyme catalyses chondroitin beta-D-glucuronate + n 3'-phosphoadenylyl sulfate = chondroitin 4'-sulfate + n adenosine 3',5'-bisphosphate + n H(+). Its function is as follows. Catalyzes the transfer of sulfate to position 4 of the N-acetylgalactosamine (GalNAc) residue of chondroitin. Chondroitin sulfate constitutes the predominant proteoglycan present in cartilage and is distributed on the surfaces of many cells and extracellular matrices. Can also sulfate Gal residues in desulfated dermatan sulfate. Preferentially sulfates in GlcA-&gt;GalNAc unit than in IdoA-&gt;GalNAc unit. Does not form 4, 6-di-O-sulfated GalNAc when chondroitin sulfate C is used as an acceptor. The sequence is that of Carbohydrate sulfotransferase 11 (Chst11) from Rattus norvegicus (Rat).